The following is a 1394-amino-acid chain: Cyclic nucleotide-gated channel beta-1 (1394 aa).

3 disordered regions span residues 1-95, 112-253, and 271-675; these read MLGW…AHSS, VPQP…QDSA, and VIRG…SQNS. Topologically, residues 1–762 are cytoplasmic; sequence MLGWVQRVLP…WKKYQFPQSI (762 aa). Polar residues-rich tracts occupy residues 68–86 and 116–125; these read PQGT…QAQV and AHSSRPSQNI. Composition is skewed to basic and acidic residues over residues 300-312 and 336-355; these read EESH…VDPH and DEEK…RIQE. Over residues 356–387 the composition is skewed to acidic residues; it reads EKEDEEEEKEDGEEEEEEGREKEEEEGEEKEE. The span at 388-408 shows a compositional bias: basic and acidic residues; it reads EEGREKEEEEGEKKEEEGREK. Residues 409–418 are compositionally biased toward acidic residues; sequence EEEEGGEKED. The segment covering 419-433 has biased composition (basic and acidic residues); that stretch reads EEGREKEEEEGRGKE. 2 stretches are compositionally biased toward acidic residues: residues 452–464 and 481–490; these read EGRE…EEEQ and DRSEESETQD. 2 stretches are compositionally biased toward low complexity: residues 493–508 and 529–554; these read EVGG…GAQA and EVGG…AQDQ. The span at 654-675 shows a compositional bias: polar residues; the sequence is DPTSPQGTDDQDRATSTASQNS. The tract at residues 671–681 is calmodulin-binding CaM1; the sequence is ASQNSAIINDR. The short motif at 682–692 is the IQ-like element; that stretch reads LQELVKLFKER. The interval 699–732 is disordered; the sequence is KLIDPDVTSDEESPKPSPAKKAPEPAPEVKPAEA. Residues 763-793 traverse the membrane as a helical segment; the sequence is DPLTNLMYILWLFFVVLAWNWNCWLIPVRWA. Topologically, residues 794-798 are extracellular; sequence FPYQT. The chain crosses the membrane as a helical span at residues 799–825; sequence PDNIHLWLLMDYLCDLIYLLDITVFQM. Topologically, residues 826–837 are cytoplasmic; the sequence is RLQFVRGGDIIT. A helical membrane pass occupies residues 838-861; it reads DKKEMRNNYVKSQRFKMDMLCLLP. Residues 862–872 lie on the Extracellular side of the membrane; the sequence is LDLLYLKFGVN. The chain crosses the membrane as a helical span at residues 873–887; sequence PLLRLPRCLKYMAFF. Over 888 to 900 the chain is Cytoplasmic; that stretch reads EFNNRLESILSKA. Positions 900–999 are ion conduction pathway; that stretch reads AYVYRVIRTT…IGQMRDVVGA (100 aa). Residues 901–922 form a helical membrane-spanning segment; the sequence is YVYRVIRTTAYLLYSLHLNSCL. Topologically, residues 923–931 are extracellular; sequence YYWASAYEG. The next 2 helical transmembrane spans lie at 932 to 974 and 975 to 1002; these read LGST…EIVF and QGLN…AATA. Residues 959 to 962 form a selectivity filter region; that stretch reads TIGG. Topologically, residues 1003–1394 are cytoplasmic; sequence GQTYYRSCMD…EEARKEKEEE (392 aa). The segment at 1082 to 1198 is cyclic nucleotide-binding domain; the sequence is RQMIFDMLKR…LLRKKARRML (117 aa). Positions 1143, 1144, 1146, 1156, and 1157 each coordinate 3',5'-cyclic GMP. Residue R1156 coordinates 3',5'-cyclic AMP. The interval 1261 to 1267 is calmodulin-binding CaM2; sequence QQQLLEQ. Positions 1265–1394 are disordered; sequence LEQAKSSEDA…EEARKEKEEE (130 aa). The segment covering 1285–1326 has biased composition (pro residues); that stretch reads EQPPRPEPPAPEAPAPEPTAPEPLAPEAPAPEAPAPSSPPPA. Basic and acidic residues-rich tracts occupy residues 1329 to 1345 and 1364 to 1376; these read ERPE…EHPV and VPEK…KKEE.

This sequence belongs to the cyclic nucleotide-gated cation channel (TC 1.A.1.5) family. CNGB1 subfamily. In terms of assembly, the rod cyclic nucleotide-gated channel is a heterotetramer composed of CNGA1 and CNGB1 subunits with 3:1 stoichiometry. CNGA1:CNGB1 channel binds Ca(2+)-bound CALM1 via CaM1 and CaM2 regions of the CNGB1 subunit; this interaction modulates the affinity of the channel for cNMPs in response to intracellular Ca(2+) levels. The olfactory cyclic nucleotide-gated channel is a heterotetramer composed of CNGA2, CNGA4 and CNGB1 subunits with 2:1:1 stoichiometry. As to expression, retina, testis, kidney, heart and brain.

It is found in the membrane. The enzyme catalyses Ca(2+)(in) = Ca(2+)(out). It carries out the reaction Na(+)(in) = Na(+)(out). The catalysed reaction is K(+)(in) = K(+)(out). It catalyses the reaction NH4(+)(in) = NH4(+)(out). The enzyme catalyses Rb(+)(in) = Rb(+)(out). It carries out the reaction Li(+)(in) = Li(+)(out). The catalysed reaction is Cs(+)(in) = Cs(+)(out). In terms of biological role, pore-forming subunit of the rod cyclic nucleotide-gated channel. Mediates rod photoresponses at dim light converting transient changes in intracellular cGMP levels into electrical signals. In the dark, cGMP levels are high and keep the channel open enabling a steady inward current carried by Na(+) and Ca(2+) ions that leads to membrane depolarization and neurotransmitter release from synaptic terminals. Upon photon absorption cGMP levels decline leading to channel closure and membrane hyperpolarization that ultimately slows neurotransmitter release and signals the presence of light, the end point of the phototransduction cascade. Pore-forming subunit of the olfactory cyclic nucleotide-gated channel. Operates in the cilia of olfactory sensory neurons where chemical stimulation of the odorant is converted to an electrical signal. Mediates odorant-induced cAMP-dependent Ca(2+) influx triggering neuron depolarization. The rise of intracellular Ca(2+) levels potentiates the olfactory response by activating Ca(2+)-dependent Cl(-) channels, but it also serves as a negative feedback signal to desensitize the channel for rapid adaptation to odorants. Conducts cGMP- and cAMP-gated ion currents, with permeability for monovalent and divalent cations. The selectivity for Ca(2+) over Na(+) increases with cGMP concentrations, whereas the selectivity among monovalent ions is independent of the cGMP levels. The sequence is that of Cyclic nucleotide-gated channel beta-1 from Bos taurus (Bovine).